Consider the following 505-residue polypeptide: ATP synthase subunit alpha (505 aa).

170–177 (GDRQTGKT) lines the ATP pocket.

The protein belongs to the ATPase alpha/beta chains family. F-type ATPases have 2 components, CF(1) - the catalytic core - and CF(0) - the membrane proton channel. CF(1) has five subunits: alpha(3), beta(3), gamma(1), delta(1), epsilon(1). CF(0) has four main subunits: a(1), b(1), b'(1) and c(9-12).

The protein resides in the cellular thylakoid membrane. The catalysed reaction is ATP + H2O + 4 H(+)(in) = ADP + phosphate + 5 H(+)(out). In terms of biological role, produces ATP from ADP in the presence of a proton gradient across the membrane. The alpha chain is a regulatory subunit. This chain is ATP synthase subunit alpha, found in Prochlorococcus marinus subsp. pastoris (strain CCMP1986 / NIES-2087 / MED4).